The primary structure comprises 302 residues: Nucleotide-binding protein Bmul_0520/BMULJ_02739 (302 aa).

8 to 15 (GISGSGKS) is an ATP binding site. A GTP-binding site is contributed by 57 to 60 (DARS).

This sequence belongs to the RapZ-like family.

Functionally, displays ATPase and GTPase activities. In Burkholderia multivorans (strain ATCC 17616 / 249), this protein is Nucleotide-binding protein Bmul_0520/BMULJ_02739.